The sequence spans 640 residues: ATP-dependent DNA helicase YoaA (640 aa).

Positions 16–278 (ELSQNIKGFR…KDMQQLGTTS (263 aa)) constitute a Helicase ATP-binding domain. 51 to 58 (AGTGTGKT) provides a ligand contact to ATP. Residue Cys-114 participates in [4Fe-4S] cluster binding. A DEAH box motif is present at residues 125–128 (GVLG). Residues Cys-174, Cys-179, and Cys-185 each coordinate [4Fe-4S] cluster. The short motif at 231-234 (DEAH) is the DEAH box element. A Helicase C-terminal domain is found at 458-634 (SLGEILLPVI…SRTRDLNKVI (177 aa)).

This sequence belongs to the helicase family. DinG subfamily. It depends on [4Fe-4S] cluster as a cofactor.

The enzyme catalyses Couples ATP hydrolysis with the unwinding of duplex DNA at the replication fork by translocating in the 5'-3' direction. This creates two antiparallel DNA single strands (ssDNA). The leading ssDNA polymer is the template for DNA polymerase III holoenzyme which synthesizes a continuous strand.. It catalyses the reaction ATP + H2O = ADP + phosphate + H(+). In terms of biological role, probably a 5'-3' DNA helicase. The chain is ATP-dependent DNA helicase YoaA from Haemophilus influenzae (strain ATCC 51907 / DSM 11121 / KW20 / Rd).